A 99-amino-acid polypeptide reads, in one-letter code: Protein SPIRAL1-like 5 (99 aa).

The segment covering 1–12 (MSRGGSFGGGQS) has biased composition (gly residues). Positions 1 to 99 (MSRGGSFGGG…SSLGYLFGDK (99 aa)) are disordered. Residues 27–39 (TPAPPVAPKPAPP) are compositionally biased toward pro residues. Positions 56-73 (KISNNNYQRVQGQNSGNF) are enriched in polar residues. A Phosphoserine modification is found at Ser58.

This sequence belongs to the SPIRAL1 family. As to expression, expressed exclusively in stems and flowers.

In terms of biological role, acts redundantly with SPR1 in maintaining the cortical microtubules organization essential for anisotropic cell growth. The polypeptide is Protein SPIRAL1-like 5 (SP1L5) (Arabidopsis thaliana (Mouse-ear cress)).